The sequence spans 499 residues: U4/U6 small nuclear ribonucleoprotein Prp31 (499 aa).

The segment at 1 to 43 is disordered; sequence MSLADELLADLEEAAEEEEGGSYGEEEEEPAIEDVQEETQLDL. A compositionally biased stretch (acidic residues) spans 7–40; that stretch reads LLADLEEAAEEEEGGSYGEEEEEPAIEDVQEETQ. Coiled coils occupy residues 85-120 and 181-215; these read EAAP…KYSK and DEEL…MSFI. In terms of domain architecture, Nop spans 215 to 333; that stretch reads IAPNLSIIIG…IERKFDKWQE (119 aa). Residues 334 to 357 are disordered; the sequence is PPPVKQVKPLPAPLDGQRKKRGGR. A Nuclear localization signal (NLS) motif is present at residues 351 to 364; the sequence is RKKRGGRRYRKMKE. Phosphoserine is present on residues Ser379, Ser395, and Ser432. N6-acetyllysine is present on Lys438. Ser439 is subject to Phosphoserine. Thr440 carries the phosphothreonine modification. Ser450 carries the phosphoserine modification. A Phosphothreonine modification is found at Thr455. Glycyl lysine isopeptide (Lys-Gly) (interchain with G-Cter in SUMO2) cross-links involve residues Lys471 and Lys478.

It belongs to the PRP31 family. As to quaternary structure, identified in the spliceosome B complex. Component of the U4/U6-U5 tri-snRNP complex composed of the U4, U6 and U5 snRNAs and at least PRPF3, PRPF4, PRPF6, PRPF8, PRPF31, SNRNP200, TXNL4A, SNRNP40, DDX23, CD2BP2, PPIH, SNU13, EFTUD2, SART1 and USP39. Interacts with a complex formed by SNU13 and U4 snRNA, but not with SNU13 or U4 snRNA alone. The complex formed by SNU13 and PRPF31 also binds U4atac snRNA, a characteristic component of specific, less abundant spliceosomal complexes. Interacts with PRPF6/U5 snRNP-associated 102 kDa protein. Component of some MLL1/MLL complex, at least composed of the core components KMT2A/MLL1, ASH2L, HCFC1/HCF1, WDR5 and RBBP5, as well as the facultative components BACC1, CHD8, E2F6, HSP70, INO80C, KANSL1, LAS1L, MAX, MCRS1, MGA, KAT8/MOF, PELP1, PHF20, PRP31, RING2, RUVB1/TIP49A, RUVB2/TIP49B, SENP3, TAF1, TAF4, TAF6, TAF7, TAF9 and TEX10. Interacts (via its NLS) with CTNNBL1. Interacts with USH1G. Phosphorylated by PRP4K during spliceosome assembly.

Its subcellular location is the nucleus. The protein localises to the nucleus speckle. The protein resides in the cajal body. Its function is as follows. Involved in pre-mRNA splicing as component of the spliceosome. Required for the assembly of the U4/U5/U6 tri-snRNP complex, one of the building blocks of the spliceosome. The polypeptide is U4/U6 small nuclear ribonucleoprotein Prp31 (Prpf31) (Mus musculus (Mouse)).